We begin with the raw amino-acid sequence, 170 residues long: Tubulin polymerization-promoting protein family member 2 (170 aa).

The segment at 127 to 170 (TGTHKERFDESGKGKGIAGREEMTDNTGYVSGYKGSGTYDKKTK) is disordered. A compositionally biased stretch (basic and acidic residues) spans 129 to 149 (THKERFDESGKGKGIAGREEM).

This sequence belongs to the TPPP family. In terms of tissue distribution, expressed in spermatids. Detected in liver cancer (at protein level).

It localises to the cytoplasm. The protein resides in the cytosol. It is found in the cell projection. Its subcellular location is the cilium. The protein localises to the flagellum. In terms of biological role, probable regulator of microtubule dynamics required for sperm motility. In contrast to other members of the family, has no microtubule bundling activity. This is Tubulin polymerization-promoting protein family member 2 from Homo sapiens (Human).